Reading from the N-terminus, the 36-residue chain is Photosystem II reaction center protein Y (36 aa).

The Lumenal portion of the chain corresponds to 1–4 (MDSR). A helical transmembrane segment spans residues 5 to 23 (LLVVLIPVLAAASWAVYNI). The Stromal segment spans residues 24–36 (GRVALQQFRKMTS).

Belongs to the PsbY family. As to quaternary structure, PSII is composed of 1 copy each of membrane proteins PsbA, PsbB, PsbC, PsbD, PsbE, PsbF, PsbH, PsbI, PsbJ, PsbK, PsbL, PsbM, PsbT, PsbX, PsbY, PsbZ, Psb30/Ycf12, at least 3 peripheral proteins of the oxygen-evolving complex and a large number of cofactors. It forms dimeric complexes.

The protein localises to the plastid. The protein resides in the chloroplast thylakoid membrane. Loosely associated component of the core of photosystem II (PSII), it is not always seen in crystals. PSII is a light-driven water plastoquinone oxidoreductase, using light energy to abstract electrons from H(2)O, generating a proton gradient subsequently used for ATP formation. This is Photosystem II reaction center protein Y from Pyropia yezoensis (Susabi-nori).